Here is a 58-residue protein sequence, read N- to C-terminus: DNA-directed RNA polymerases I, II, and III subunit RPABC4 (58 aa).

Residues C19, C22, C36, and C39 each coordinate Zn(2+). The C4-type zinc finger occupies 19 to 39 (CGECHTENEIKSRDPIRCREC).

It belongs to the archaeal Rpo12/eukaryotic RPC10 RNA polymerase subunit family. In terms of assembly, component of the RNA polymerase I (Pol I), RNA polymerase II (Pol II) and RNA polymerase III (Pol III) complexes consisting of at least 13, 12 and 17 subunits, respectively. Pol I complex consists of a ten-subunit catalytic core composed of POLR1A/RPA1, POLR1B/RPA2, POLR1C/RPAC1, POLR1D/RPAC2, POLR1H/RPA12, POLR2E/RPABC1, POLR2F/RPABC2, POLR2H/RPABC3, POLR2K/RPABC4 and POLR2L/RPABC5; a mobile stalk subunit POLR1F/RPA43 protruding from the core and additional subunits homologous to general transcription factors POLR1E/RPA49 and POLR1G/RPA34. Part of Pol I pre-initiation complex (PIC), in which Pol I core assembles with RRN3 and promoter-bound UTBF and SL1/TIF-IB complex. Pol II complex contains a ten-subunit catalytic core composed of POLR2A/RPB1, POLR2B/RPB2, POLR2C/RPB3, POLR2I/RPB9, POLR2J/RPB11, POLR2E/RPABC1, POLR2F/RPABC2, POLR2H/RPABC3, POLR2K/RPABC4 and POLR2L/RPABC5 and a mobile stalk composed of two subunits POLR2D/RPB4 and POLR2G/RPB7. Part of Pol II(G) complex, in which Pol II core associates with an additional subunit POLR2M; unlike conventional Pol II, Pol II(G) functions as a transcriptional repressor. Part of TBP-based Pol II pre-initiation complex (PIC), in which Pol II core assembles with general transcription factors and other specific initiation factors including GTF2E1, GTF2E2, GTF2F1, GTF2F2, TCEA1, ERCC2, ERCC3, GTF2H2, GTF2H3, GTF2H4, GTF2H5, GTF2A1, GTF2A2, GTF2B and TBP; this large multi-subunit PIC complex mediates DNA unwinding and targets Pol II core to the transcription start site where the first phosphodiester bond forms. Pol III complex consists of a ten-subunit catalytic core composed of POLR3A/RPC1, POLR3B/RPC2, POLR1C/RPAC1, POLR1D/RPAC2, POLR3K/RPC10, POLR2E/RPABC1, POLR2F/RPABC2, POLR2H/RPABC3, POLR2K/RPABC4 and POLR2L/RPABC5; a mobile stalk composed of two subunits POLR3H/RPC8 and CRCP/RPC9, protruding from the core and functioning primarily in transcription initiation; and additional subunits homologous to general transcription factors of the RNA polymerase II machinery, POLR3C/RPC3-POLR3F/RPC6-POLR3G/RPC7 heterotrimer required for transcription initiation and POLR3D/RPC4-POLR3E/RPC5 heterodimer involved in both transcription initiation and termination.

Its subcellular location is the nucleus. The protein localises to the nucleolus. In terms of biological role, DNA-dependent RNA polymerase catalyzes the transcription of DNA into RNA using the four ribonucleoside triphosphates as substrates. Common component of RNA polymerases I, II and III which synthesize ribosomal RNA precursors, mRNA precursors and many functional non-coding RNAs, and a small RNAs, such as 5S rRNA and tRNAs, respectively. The sequence is that of DNA-directed RNA polymerases I, II, and III subunit RPABC4 (POLR2K) from Bos taurus (Bovine).